Reading from the N-terminus, the 114-residue chain is Iron-sulfur cluster insertion protein ErpA (114 aa).

Iron-sulfur cluster contacts are provided by Cys42, Cys106, and Cys108.

It belongs to the HesB/IscA family. In terms of assembly, homodimer. Requires iron-sulfur cluster as cofactor.

Functionally, required for insertion of 4Fe-4S clusters for at least IspG. The sequence is that of Iron-sulfur cluster insertion protein ErpA from Yersinia enterocolitica serotype O:8 / biotype 1B (strain NCTC 13174 / 8081).